The chain runs to 129 residues: uncharacterized protein (129 aa).

2 consecutive transmembrane segments (helical) span residues I35–P55 and I98–L118.

The protein resides in the membrane. This is an uncharacterized protein from Saccharomyces cerevisiae (strain ATCC 204508 / S288c) (Baker's yeast).